The following is a 268-amino-acid chain: uncharacterized protein (268 aa).

The next 4 membrane-spanning stretches (helical) occupy residues 32 to 52, 70 to 90, 125 to 145, and 237 to 257; these read SLLL…IFFI, VFVG…AFLF, GVSS…FYIF, and IKYI…AYLT.

This sequence belongs to the CbiQ family.

The protein localises to the cell membrane. This is an uncharacterized protein from Methanocaldococcus jannaschii (strain ATCC 43067 / DSM 2661 / JAL-1 / JCM 10045 / NBRC 100440) (Methanococcus jannaschii).